The sequence spans 712 residues: Eukaryotic translation initiation factor 3 subunit B (712 aa).

The sufficient for interaction with HCR1 and TIF32 stretch occupies residues 1–98 (MSLTEAEYHE…LFVQFETSEM (98 aa)). Residues 1–224 (MSLTEAEYHE…GVQSWGGADF (224 aa)) form a sufficient for interaction with PIC8 region. Residues 37–124 (NYVVVDGAPI…HRLLVNRLSD (88 aa)) enclose the RRM domain. WD repeat units lie at residues 191-229 (RKFF…SIDK), 230-293 (FMHN…RTFA), 301-339 (QKEM…LLDK), 342-384 (IKID…QTAR), 452-493 (ELKE…DFYA), 513-555 (ITDK…SNKN), and 566-604 (DKFS…YEFT).

Belongs to the eIF-3 subunit B family. In terms of assembly, component of the eukaryotic translation initiation factor 3 (eIF-3) complex.

The protein localises to the cytoplasm. Functionally, RNA-binding component of the eukaryotic translation initiation factor 3 (eIF-3) complex, which is involved in protein synthesis of a specialized repertoire of mRNAs and, together with other initiation factors, stimulates binding of mRNA and methionyl-tRNAi to the 40S ribosome. The eIF-3 complex specifically targets and initiates translation of a subset of mRNAs involved in cell proliferation. The sequence is that of Eukaryotic translation initiation factor 3 subunit B from Scheffersomyces stipitis (strain ATCC 58785 / CBS 6054 / NBRC 10063 / NRRL Y-11545) (Yeast).